The chain runs to 566 residues: MDLHYDCAESPAAEQPSGKINKTAFKLFGKRKSGSGMPTIFGVKNKGDSKGTGKIGMVRSKTLDGLADVVLESNKKEEPCTEAGAGQLNPEKSPKVLTINADVSSNSSVAKSHSFFSLLKKNGKSENVRGEQAEQKAGSRQKRGLKGLFNSMRWSKKDKSYKDDKEGASESQPGLILPSSLTASLECIKEETQKPLCEKGKSTEDIPADVPLAEHSGDVNTSAEENSLKASEESPCSALITEQPQLEDAPLAQLQENLCQLPQPEVETLQNNKDEHVTGCGDVIADQDDDGGSSMGSKLVPGNGKKVMSKKNTNIVAYQGGGEEMASPEQVDETYVQELFSMIPPSEGASEKTEKVNGTTQASREVKCSDSAQDRNAIKPSKLKQVPVYRKERGDQNSKANEKRQCLRNSDEGYWDSPTPGQEEEEPRSVGKQALARDSCSGDALYDLYTDPDESIAKAQVEEPPLSHSHSKPLSPVTTSCPVKTASSNKESKIPISIKHLPVHTTNQGTDSSSGSATGHPHPVKSELPRTKIPVSKVLVRRVSNKAITETAAGKRAIHDPARKHH.

Disordered regions lie at residues 120 to 176 (KKNG…PGLI), 192 to 237 (TQKP…SPCS), 277 to 307 (VTGCGDVIADQDDDGGSSMGSKLVPGNGKKV), and 342 to 533 (MIPP…RTKI). Basic and acidic residues-rich tracts occupy residues 123 to 134 (GKSENVRGEQAE), 155 to 168 (SKKDKSYKDDKEGA), and 192 to 204 (TQKPLCEKGKSTE). 2 stretches are compositionally biased toward basic and acidic residues: residues 364-377 (REVKCSDSAQDRNA) and 389-411 (YRKERGDQNSKANEKRQCLRNSD). Over residues 464–476 (PPLSHSHSKPLSP) the composition is skewed to low complexity. Polar residues-rich tracts occupy residues 477–489 (VTTSCPVKTASSN) and 504–517 (HTTNQGTDSSSGSA).

The protein belongs to the Amer family.

The protein localises to the cell membrane. In terms of biological role, negative regulator of the canonical Wnt signaling pathway involved in neuroectodermal patterning. Acts by specifically binding phosphatidylinositol 4,5-bisphosphate (PtdIns(4,5)P2), translocating to the cell membrane and interacting with key regulators of the canonical Wnt signaling pathway, such as components of the beta-catenin destruction complex. The polypeptide is APC membrane recruitment protein 2 (amer2) (Xenopus tropicalis (Western clawed frog)).